We begin with the raw amino-acid sequence, 927 residues long: Translation initiation factor IF-2 (927 aa).

Positions 27-337 are disordered; the sequence is LGLPVKSHAS…GAPKPVTERK (311 aa). Positions 49-69 are enriched in polar residues; sequence SFSSSKTKAPTNSVQTNQGVK. Composition is skewed to basic and acidic residues over residues 70–86 and 101–138; these read TESK…DDKP and FKAE…DRRH. The span at 146–159 shows a compositional bias: low complexity; sequence GNRNDNRQGQQNNR. Basic and acidic residues-rich tracts occupy residues 160–171, 202–226, and 234–257; these read NKNDGRYADHKQ, YSRH…EQEL, and AQEE…KEIV. A compositionally biased stretch (low complexity) spans 300 to 316; that stretch reads NWNNQNQVRNQRNSNWN. Residues 428-597 enclose the tr-type G domain; sequence ERPPVVTIMG…LLVAEMEELK (170 aa). Residues 437 to 444 form a G1 region; the sequence is GHVDHGKT. Residue 437–444 coordinates GTP; the sequence is GHVDHGKT. Residues 462–466 form a G2 region; it reads GITQH. A G3 region spans residues 483–486; the sequence is DTPG. GTP contacts are provided by residues 483-487 and 537-540; these read DTPGH and NKID. The interval 537 to 540 is G4; it reads NKID. The interval 573–575 is G5; the sequence is SAK.

This sequence belongs to the TRAFAC class translation factor GTPase superfamily. Classic translation factor GTPase family. IF-2 subfamily.

Its subcellular location is the cytoplasm. Its function is as follows. One of the essential components for the initiation of protein synthesis. Protects formylmethionyl-tRNA from spontaneous hydrolysis and promotes its binding to the 30S ribosomal subunits. Also involved in the hydrolysis of GTP during the formation of the 70S ribosomal complex. This is Translation initiation factor IF-2 from Streptococcus agalactiae serotype V (strain ATCC BAA-611 / 2603 V/R).